A 277-amino-acid chain; its full sequence is S-formylglutathione hydrolase FrmB (277 aa).

Catalysis depends on charge relay system residues Ser145, Asp221, and His254.

Belongs to the esterase D family.

The enzyme catalyses S-formylglutathione + H2O = formate + glutathione + H(+). Functionally, serine hydrolase involved in the detoxification of formaldehyde. Hydrolyzes S-formylglutathione to glutathione and formate. In Escherichia coli O139:H28 (strain E24377A / ETEC), this protein is S-formylglutathione hydrolase FrmB (frmB).